The following is a 284-amino-acid chain: SF-assemblin (284 aa).

The disordered stretch occupies residues 1–30; it reads PTPSPEARVASRPFLDSPLPGSPRSGSPTG. The interval 1–38 is nonhelical region; it reads PTPSPEARVASRPFLDSPLPGSPRSGSPTGYITATKAI. Positions 17–30 are enriched in low complexity; the sequence is SPLPGSPRSGSPTG. The tract at residues 39 to 284 is rod; sequence SAGKLEHVAE…QDGLRIVNNS (246 aa). Coiled-coil stretches lie at residues 56-102 and 239-268; these read EIEL…QIQV and LDEI…QAVN.

This sequence belongs to the SF-assemblin family. Post-translationally, consists of at least four isoforms including two phosphorylated.

It localises to the cytoplasm. The protein localises to the cytoskeleton. Functionally, major component of the striated microtubule-associated fibers (SMAFs; system-I-fibers). In Spermatozopsis similis (Green alga), this protein is SF-assemblin.